The sequence spans 245 residues: 1-(5-phosphoribosyl)-5-[(5-phosphoribosylamino)methylideneamino] imidazole-4-carboxamide isomerase (245 aa).

Aspartate 7 functions as the Proton acceptor in the catalytic mechanism. Aspartate 129 functions as the Proton donor in the catalytic mechanism.

The protein belongs to the HisA/HisF family.

It localises to the cytoplasm. The enzyme catalyses 1-(5-phospho-beta-D-ribosyl)-5-[(5-phospho-beta-D-ribosylamino)methylideneamino]imidazole-4-carboxamide = 5-[(5-phospho-1-deoxy-D-ribulos-1-ylimino)methylamino]-1-(5-phospho-beta-D-ribosyl)imidazole-4-carboxamide. Its pathway is amino-acid biosynthesis; L-histidine biosynthesis; L-histidine from 5-phospho-alpha-D-ribose 1-diphosphate: step 4/9. The protein is 1-(5-phosphoribosyl)-5-[(5-phosphoribosylamino)methylideneamino] imidazole-4-carboxamide isomerase of Shewanella baltica (strain OS155 / ATCC BAA-1091).